Reading from the N-terminus, the 496-residue chain is Probable cytosol aminopeptidase (496 aa).

Mn(2+) contacts are provided by K267 and D272. Residue K279 is part of the active site. 3 residues coordinate Mn(2+): D290, D349, and E351. Residue R353 is part of the active site.

It belongs to the peptidase M17 family. It depends on Mn(2+) as a cofactor.

The protein resides in the cytoplasm. It carries out the reaction Release of an N-terminal amino acid, Xaa-|-Yaa-, in which Xaa is preferably Leu, but may be other amino acids including Pro although not Arg or Lys, and Yaa may be Pro. Amino acid amides and methyl esters are also readily hydrolyzed, but rates on arylamides are exceedingly low.. It catalyses the reaction Release of an N-terminal amino acid, preferentially leucine, but not glutamic or aspartic acids.. Functionally, presumably involved in the processing and regular turnover of intracellular proteins. Catalyzes the removal of unsubstituted N-terminal amino acids from various peptides. In Methylobacillus flagellatus (strain ATCC 51484 / DSM 6875 / VKM B-1610 / KT), this protein is Probable cytosol aminopeptidase.